The following is a 99-amino-acid chain: Ubiquitin-related modifier 1 homolog 2 (99 aa).

Glycine 99 carries the 1-thioglycine modification. Glycine 99 is covalently cross-linked (Glycyl lysine isopeptide (Gly-Lys) (interchain with K-? in acceptor proteins)).

It belongs to the URM1 family. C-terminal thiocarboxylation occurs in 2 steps, it is first acyl-adenylated (-COAMP) via the hesA/moeB/thiF part of the MOCS3 homolog, then thiocarboxylated (-COSH) via the rhodanese domain of the MOCS3 homolog.

It localises to the cytoplasm. The protein operates within tRNA modification; 5-methoxycarbonylmethyl-2-thiouridine-tRNA biosynthesis. Its function is as follows. Acts as a sulfur carrier required for 2-thiolation of mcm(5)S(2)U at tRNA wobble positions of cytosolic tRNA(Lys), tRNA(Glu) and tRNA(Gln). Serves as sulfur donor in tRNA 2-thiolation reaction by being thiocarboxylated (-COSH) at its C-terminus by MOCS3. The sulfur is then transferred to tRNA to form 2-thiolation of mcm(5)S(2)U. Also acts as a ubiquitin-like protein (UBL) that is covalently conjugated via an isopeptide bond to lysine residues of target proteins. The thiocarboxylated form serves as substrate for conjugation and oxidative stress specifically induces the formation of UBL-protein conjugates. The protein is Ubiquitin-related modifier 1 homolog 2 of Arabidopsis thaliana (Mouse-ear cress).